The primary structure comprises 518 residues: 2-isopropylmalate synthase (518 aa).

The Pyruvate carboxyltransferase domain occupies 4–266 (INVFDTTLRD…DSSLNLHELK (263 aa)). Mn(2+) is bound by residues D13, H201, H203, and N237. The regulatory domain stretch occupies residues 391–518 (EFLSLQVHYG…GLKRQTAVGS (128 aa)).

Belongs to the alpha-IPM synthase/homocitrate synthase family. LeuA type 1 subfamily. As to quaternary structure, homodimer. It depends on Mn(2+) as a cofactor.

The protein resides in the cytoplasm. It carries out the reaction 3-methyl-2-oxobutanoate + acetyl-CoA + H2O = (2S)-2-isopropylmalate + CoA + H(+). It functions in the pathway amino-acid biosynthesis; L-leucine biosynthesis; L-leucine from 3-methyl-2-oxobutanoate: step 1/4. Catalyzes the condensation of the acetyl group of acetyl-CoA with 3-methyl-2-oxobutanoate (2-ketoisovalerate) to form 3-carboxy-3-hydroxy-4-methylpentanoate (2-isopropylmalate). The protein is 2-isopropylmalate synthase of Bacillus velezensis (strain DSM 23117 / BGSC 10A6 / LMG 26770 / FZB42) (Bacillus amyloliquefaciens subsp. plantarum).